A 246-amino-acid polypeptide reads, in one-letter code: Trypsin-5 (246 aa).

Positions 1–15 (MNSLLFLALVGAAVA) are cleaved as a signal peptide. Residues 16 to 23 (FPVDDDDK) constitute a propeptide, activation peptide. In terms of domain architecture, Peptidase S1 spans 24 to 244 (IVGGYTCREN…YVDWIQDTIA (221 aa)). A disulfide bond links Cys-48 and Cys-64. Residues His-63 and Asp-107 each act as charge relay system in the active site. Cystine bridges form between Cys-139–Cys-206, Cys-171–Cys-185, and Cys-196–Cys-220. Catalysis depends on Ser-200, which acts as the Charge relay system.

Belongs to the peptidase S1 family. In terms of processing, proteolytically cleaved and activated by an autocatalytic mechanism. Cleavage by CTRC inhibits autoactivation. In terms of tissue distribution, expressed in the heart, lung, brain, kidney, liver, epididymis, ovary and uterus. Expression in the testis is limited to round and elongating spermatids.

The protein localises to the cytoplasmic vesicle. The protein resides in the secretory vesicle. It localises to the acrosome. It catalyses the reaction Preferential cleavage: Arg-|-Xaa, Lys-|-Xaa.. Activated by autocatalytic cleavage. Cleavage by CTRC inhibits autoactivation. Its function is as follows. Serine protease capable of autoactivation. This is Trypsin-5 from Mus musculus (Mouse).